Consider the following 266-residue polypeptide: Inositol-1-monophosphatase (266 aa).

Mg(2+) contacts are provided by Glu69, Asp86, Leu88, and Asp89. Position 69 (Glu69) interacts with substrate. Substrate contacts are provided by residues 88–91 (LDGT), Arg185, and Asp214. Residue Asp214 participates in Mg(2+) binding.

Belongs to the inositol monophosphatase superfamily. Mg(2+) is required as a cofactor.

It carries out the reaction a myo-inositol phosphate + H2O = myo-inositol + phosphate. This is Inositol-1-monophosphatase (suhB) from Rhizobium meliloti (strain 1021) (Ensifer meliloti).